Here is a 262-residue protein sequence, read N- to C-terminus: Acyl-coenzyme A diphosphatase FITM2 (262 aa).

Residues 1 to 23 (MEHLERCAWVLRGTLVRAAVRRY) are Cytoplasmic-facing. The chain crosses the membrane as a helical span at residues 24–44 (LPWALAASMLAGSLLKELSPL). Topologically, residues 45-57 (PESYLSNKRNVLN) are lumenal. A helical transmembrane segment spans residues 58 to 78 (VYFVKVAWAWTFCLLLPFIAL). Residues 79-93 (TNYHLTGKAGLVLRR) are Cytoplasmic-facing. The chain crosses the membrane as a helical span at residues 94–114 (LSTLLVGTAIWYVCTAIFSNV). The Lumenal portion of the chain corresponds to 115–145 (EHYTGSCYQSPALEGVRNEPLSKQQCHGQGG). The chain crosses the membrane as a helical span at residues 146–166 (FWHGFDISGHSFLLTFCALMI). H155 is an active-site residue. Topologically, residues 167-185 (VEEMAVLHEVKTDRSHCLH) are cytoplasmic. Residues 186–206 (VAITALVVALGFLTFIWVWMF) form a helical membrane-spanning segment. Topologically, residues 207–218 (LCTAVYFHNLSQ) are lumenal. The active site involves H214. A helical transmembrane segment spans residues 219 to 239 (KVFGTLFGLLGWYGTYGFWYL). Topologically, residues 240–262 (KSFSPGLPPQSCSSNLKQDSYKR) are cytoplasmic.

Belongs to the FIT family. FIT2 subfamily.

It is found in the endoplasmic reticulum membrane. It carries out the reaction an acyl-CoA + H2O = an acyl-4'-phosphopantetheine + adenosine 3',5'-bisphosphate + 2 H(+). The enzyme catalyses (9Z)-octadecenoyl-CoA + H2O = S-(9Z-octadecenoyl)-4'-phosphopantetheine + adenosine 3',5'-bisphosphate + 2 H(+). It catalyses the reaction (5Z,8Z,11Z,14Z)-eicosatetraenoyl-CoA + H2O = S-(5Z,8Z,11Z,14Z-eicosatetraenoyl)-4'-phosphopantetheine + adenosine 3',5'-bisphosphate + 2 H(+). The catalysed reaction is hexadecanoyl-CoA + H2O = S-hexadecanoyl-4'-phosphopantetheine + adenosine 3',5'-bisphosphate + 2 H(+). Functionally, fatty acyl-coenzyme A (CoA) diphosphatase that hydrolyzes fatty acyl-CoA to yield acyl-4'-phosphopantetheine and adenosine 3',5'-bisphosphate. Preferentially hydrolyzes unsaturated long-chain acyl-CoA substrates such as oleoyl-CoA/(9Z)-octadecenoyl-CoA and arachidonoyl-CoA/(5Z,8Z,11Z,14Z)-eicosatetraenoyl-CoA in the endoplasmic reticulum (ER) lumen. This catalytic activity is required for maintaining ER structure and for lipid droplets (LDs) biogenesis, which are lipid storage organelles involved in maintaining lipid and energy homeostasis. Directly binds to diacylglycerol (DAGs) and triacylglycerol, which is also important for LD biogenesis. May support directional budding of nacent LDs from the ER into the cytosol by reducing DAG levels at sites of LD formation. Plays a role in the regulation of cell morphology and cytoskeletal organization. The protein is Acyl-coenzyme A diphosphatase FITM2 of Sus scrofa (Pig).